Consider the following 273-residue polypeptide: Type III pantothenate kinase (273 aa).

7-14 (DVGNTAIK) serves as a coordination point for ATP. Substrate-binding positions include Phe119 and 124–127 (GIDR). Asp126 acts as the Proton acceptor in catalysis. A K(+)-binding site is contributed by Asp146. Thr149 is a binding site for ATP. Position 206 (Thr206) interacts with substrate.

It belongs to the type III pantothenate kinase family. Homodimer. Requires NH4(+) as cofactor. The cofactor is K(+).

The protein localises to the cytoplasm. The catalysed reaction is (R)-pantothenate + ATP = (R)-4'-phosphopantothenate + ADP + H(+). Its pathway is cofactor biosynthesis; coenzyme A biosynthesis; CoA from (R)-pantothenate: step 1/5. Functionally, catalyzes the phosphorylation of pantothenate (Pan), the first step in CoA biosynthesis. This is Type III pantothenate kinase from Rhodopirellula baltica (strain DSM 10527 / NCIMB 13988 / SH1).